Consider the following 292-residue polypeptide: NAD kinase (292 aa).

Asp73 (proton acceptor) is an active-site residue. NAD(+)-binding positions include Asp73 to Gly74, Asn147 to Glu148, His158, Arg175, Asp177, Thr188 to Ser193, and Gln247.

It belongs to the NAD kinase family. Requires a divalent metal cation as cofactor.

Its subcellular location is the cytoplasm. It catalyses the reaction NAD(+) + ATP = ADP + NADP(+) + H(+). Functionally, involved in the regulation of the intracellular balance of NAD and NADP, and is a key enzyme in the biosynthesis of NADP. Catalyzes specifically the phosphorylation on 2'-hydroxyl of the adenosine moiety of NAD to yield NADP. The chain is NAD kinase from Erwinia tasmaniensis (strain DSM 17950 / CFBP 7177 / CIP 109463 / NCPPB 4357 / Et1/99).